The chain runs to 155 residues: Large ribosomal subunit protein uL22 (155 aa).

It belongs to the universal ribosomal protein uL22 family. In terms of assembly, part of the 50S ribosomal subunit.

This protein binds specifically to 23S rRNA. It makes multiple contacts with different domains of the 23S rRNA in the assembled 50S subunit and ribosome. Its function is as follows. The globular domain of the protein is located near the polypeptide exit tunnel on the outside of the subunit, while an extended beta-hairpin is found that lines the wall of the exit tunnel in the center of the 70S ribosome. This Pyrococcus abyssi (strain GE5 / Orsay) protein is Large ribosomal subunit protein uL22.